We begin with the raw amino-acid sequence, 92 residues long: Small ribosomal subunit protein uS19 (92 aa).

Belongs to the universal ribosomal protein uS19 family.

In terms of biological role, protein S19 forms a complex with S13 that binds strongly to the 16S ribosomal RNA. The chain is Small ribosomal subunit protein uS19 from Klebsiella pneumoniae (strain 342).